The sequence spans 92 residues: UPF0250 protein VV0902 (92 aa).

Belongs to the UPF0250 family.

The polypeptide is UPF0250 protein VV0902 (Vibrio vulnificus (strain YJ016)).